A 299-amino-acid polypeptide reads, in one-letter code: Taste receptor type 2 member 50 (299 aa).

A topological domain (extracellular) is located at residue M1. Residues 2–22 (ITFLYIFFSILIMVLFVLGNF) traverse the membrane as a helical segment. Topologically, residues 23–55 (ANGFIALVNFIDWVKRKKISSADQILTALAVSR) are cytoplasmic. Residues 56–76 (IGLLWTLLLNWYLTVLNPAFY) form a helical membrane-spanning segment. Over 77 to 87 (SVELRITSYNA) the chain is Extracellular. A helical transmembrane segment spans residues 88–108 (WVVTNHFSMWLAASLSIFYLL). Over 109–126 (KIANFSNLIFLHLKRRVR) the chain is Cytoplasmic. Residues 127–147 (SVILVILLGTLIFLVCHLLVA) traverse the membrane as a helical segment. Over 148–181 (NMDESMWAEEYEGNITGKMKLRNTVHLSYLTVTT) the chain is Extracellular. N-linked (GlcNAc...) asparagine glycosylation occurs at N161. The helical transmembrane segment at 182-202 (LWSFIPFTLSLISFLMLICSL) threads the bilayer. Residues 203-229 (CKHLKKMQLHGEGSQDLSTKVHIKALQ) are Cytoplasmic-facing. A helical transmembrane segment spans residues 230–250 (TLISFLLLCAIFFLFLIISVW). Topologically, residues 251 to 259 (SPRRLRNDP) are extracellular. Residues 260-280 (VVMVSKAVGNIYLAFDSFILI) form a helical membrane-spanning segment. Residues 281–299 (WRTKKLKHTFLLILCQIRC) lie on the Cytoplasmic side of the membrane.

The protein belongs to the G-protein coupled receptor T2R family.

It is found in the membrane. Receptor that may play a role in the perception of bitterness and is gustducin-linked. May play a role in sensing the chemical composition of the gastrointestinal content. The activity of this receptor may stimulate alpha gustducin, mediate PLC-beta-2 activation and lead to the gating of TRPM5. This Pan paniscus (Pygmy chimpanzee) protein is Taste receptor type 2 member 50 (TAS2R50).